A 222-amino-acid polypeptide reads, in one-letter code: Protein SHI RELATED SEQUENCE 4 (222 aa).

6 residues coordinate Zn(2+): Cys-72, Cys-75, Cys-83, Cys-88, Cys-92, and Cys-99. Residues Cys-72–Cys-99 constitute a DNA-binding region (zn(2)-C6 fungal-type; degenerate). A disordered region spans residues Arg-114–Tyr-137. The span at Gln-118 to Thr-128 shows a compositional bias: polar residues. Positions Ile-191–His-194 match the Required for homo- and heterodimerization motif.

The protein belongs to the SHI protein family. Expressed in cotyledon tips, leaf primordia, hydathodes, stipules, and lateral root primordia and weakly at the edges of petals and sepals.

It localises to the nucleus. Transcription activator that binds DNA on 5'-ACTCTAC-3' and promotes auxin homeostasis-regulating gene expression (e.g. YUC genes), as well as genes affecting stamen development, cell expansion and timing of flowering. Synergistically with other SHI-related proteins, regulates gynoecium, stamen and leaf development in a dose-dependent manner, controlling apical-basal patterning. Promotes style and stigma formation, and influences vascular development during gynoecium development. May also have a role in the formation and/or maintenance of the shoot apical meristem (SAM). The sequence is that of Protein SHI RELATED SEQUENCE 4 (SRS4) from Arabidopsis thaliana (Mouse-ear cress).